The sequence spans 185 residues: Ribosome-recycling factor (185 aa).

Belongs to the RRF family.

Its subcellular location is the cytoplasm. Its function is as follows. Responsible for the release of ribosomes from messenger RNA at the termination of protein biosynthesis. May increase the efficiency of translation by recycling ribosomes from one round of translation to another. This chain is Ribosome-recycling factor, found in Geobacillus thermodenitrificans (strain NG80-2).